The sequence spans 218 residues: Small ribosomal subunit protein uS3 (218 aa).

Met-1 is modified (N-acetylmethionine). A KH type-2 domain is found at 23–95 (LNELFTREFN…TVVLFAEKIL (73 aa)).

This sequence belongs to the universal ribosomal protein uS3 family.

This Dictyostelium discoideum (Social amoeba) protein is Small ribosomal subunit protein uS3 (rps3).